The primary structure comprises 413 residues: Multifunctional CCA protein (413 aa).

Positions 8 and 11 each coordinate ATP. Positions 8 and 11 each coordinate CTP. Residues Asp21 and Asp23 each contribute to the Mg(2+) site. Arg91, Arg143, and Arg146 together coordinate ATP. CTP-binding residues include Arg91, Arg143, and Arg146. One can recognise an HD domain in the interval 232 to 333; the sequence is TGVHVMMVVD…VRFFERSDAL (102 aa).

Belongs to the tRNA nucleotidyltransferase/poly(A) polymerase family. Bacterial CCA-adding enzyme type 1 subfamily. In terms of assembly, monomer. Can also form homodimers and oligomers. Mg(2+) serves as cofactor. The cofactor is Ni(2+).

It carries out the reaction a tRNA precursor + 2 CTP + ATP = a tRNA with a 3' CCA end + 3 diphosphate. It catalyses the reaction a tRNA with a 3' CCA end + 2 CTP + ATP = a tRNA with a 3' CCACCA end + 3 diphosphate. Its function is as follows. Catalyzes the addition and repair of the essential 3'-terminal CCA sequence in tRNAs without using a nucleic acid template. Adds these three nucleotides in the order of C, C, and A to the tRNA nucleotide-73, using CTP and ATP as substrates and producing inorganic pyrophosphate. tRNA 3'-terminal CCA addition is required both for tRNA processing and repair. Also involved in tRNA surveillance by mediating tandem CCA addition to generate a CCACCA at the 3' terminus of unstable tRNAs. While stable tRNAs receive only 3'-terminal CCA, unstable tRNAs are marked with CCACCA and rapidly degraded. The polypeptide is Multifunctional CCA protein (Burkholderia ambifaria (strain ATCC BAA-244 / DSM 16087 / CCUG 44356 / LMG 19182 / AMMD) (Burkholderia cepacia (strain AMMD))).